A 4544-amino-acid chain; its full sequence is Prolow-density lipoprotein receptor-related protein 1 (4544 aa).

The signal sequence occupies residues 1 to 19 (MLTPPLLLLLPLLSALVAA). Over 20–4419 (AIDAPKTCSP…EHVFSQQQPG (4400 aa)) the chain is Extracellular. LDL-receptor class A domains follow at residues 25-66 (KTCS…ICPQ) and 70-110 (QRCQ…HCRE). Intrachain disulfides connect Cys-27/Cys-40, Cys-34/Cys-53, Cys-47/Cys-64, Cys-72/Cys-85, Cys-79/Cys-98, and Cys-92/Cys-108. An EGF-like 1 domain is found at 111-149 (LQGNCSRLGCQHHCVPTLDGPTCYCNSSFQLQADGKTCK). N-linked (GlcNAc...) asparagine glycosylation is present at Asn-114. Intrachain disulfides connect Cys-115-Cys-124, Cys-120-Cys-133, Cys-135-Cys-148, Cys-154-Cys-164, Cys-160-Cys-173, and Cys-175-Cys-188. A glycan (N-linked (GlcNAc...) asparagine) is linked at Asn-136. The EGF-like 2; calcium-binding domain maps to 150 to 189 (DFDECSVYGTCSQLCTNTDGSFICGCVEGYLLQPDNRSCK). N-linked (GlcNAc...) asparagine glycosylation is found at Asn-185, Asn-239, and Asn-274. 3 LDL-receptor class B repeats span residues 292-334 (GNFY…DPAM), 335-378 (GKVF…DLVS), and 379-422 (RLVY…FENY). Asn-357 carries an N-linked (GlcNAc...) asparagine glycan. An N-linked (GlcNAc...) asparagine glycan is attached at Asn-446. The region spanning 474 to 520 (RSHACENDQYGKPGGCSDICLLANSHKARTCRCRSGFSLGSDGKSCK) is the EGF-like 3 domain. Disulfide bonds link Cys-478–Cys-493, Cys-489–Cys-504, and Cys-506–Cys-519. LDL-receptor class B repeat units lie at residues 571–613 (GFIY…DWMG), 614–659 (DNLY…DPLN), 660–710 (GWMY…DIPA), and 711–754 (GRLY…HGNY). Asn-729 carries N-linked (GlcNAc...) (complex) asparagine glycosylation. The region spanning 803-843 (GTNKCRVNNGGCSSLCLATPGSRQCACAEDQVLDADGVTCL) is the EGF-like 4 domain. Intrachain disulfides connect Cys-807–Cys-818, Cys-814–Cys-827, Cys-829–Cys-842, Cys-854–Cys-866, Cys-861–Cys-879, Cys-873–Cys-890, Cys-895–Cys-907, Cys-902–Cys-920, Cys-914–Cys-931, Cys-936–Cys-948, Cys-943–Cys-961, Cys-955–Cys-971, Cys-976–Cys-989, Cys-984–Cys-1002, Cys-996–Cys-1011, Cys-1015–Cys-1027, Cys-1022–Cys-1040, Cys-1034–Cys-1051, Cys-1062–Cys-1075, Cys-1069–Cys-1088, Cys-1082–Cys-1097, Cys-1104–Cys-1118, Cys-1112–Cys-1131, Cys-1125–Cys-1140, Cys-1145–Cys-1159, Cys-1152–Cys-1172, Cys-1166–Cys-1182, Cys-1185–Cys-1196, Cys-1192–Cys-1206, Cys-1208–Cys-1221, Cys-1227–Cys-1237, Cys-1233–Cys-1246, and Cys-1248–Cys-1261. LDL-receptor class A domains follow at residues 852–892 (PQCQ…LCHQ), 893–933 (HTCP…TCSA), 934–973 (RTCPPNQFSCASGRCIPISWTCDLDDDCGDRSDESASCAY), 974–1013 (PTCFPLTQFTCNNGRCININWRCDNDNDCGDNSDEAGCSH), 1013–1053 (HSCS…NCTN), 1060–1099 (GGCHTDEFQCRLDGLCIPLRWRCDGDTDCMDSSDEKSCEG), 1102–1142 (HVCD…NCES), and 1143–1182 (LACRPPSHPCANNTSVCLPPDKLCDGNDDCGDGSDEGELC). Ca(2+) contacts are provided by Trp-871, Asp-874, Asp-876, Asp-878, Asp-884, and Glu-885. N-linked (GlcNAc...) asparagine glycosylation is present at Asn-928. The Ca(2+) site is built by Trp-1032, Asp-1035, Asp-1037, Asp-1039, Asp-1045, and Glu-1046. Residue Asn-1050 is glycosylated (N-linked (GlcNAc...) asparagine). Ca(2+)-binding residues include Trp-1080, Asp-1083, Asp-1085, Asp-1087, Asp-1093, and Glu-1094. Asn-1154 and Asn-1155 each carry an N-linked (GlcNAc...) asparagine glycan. 2 consecutive EGF-like domains span residues 1183-1222 (DQCSLNNGGCSHNCSVAPGEGIVCSCPLGMELGPDNHTCQ) and 1223-1262 (IQSYCAKHLKCSQKCDQNKFSVKCSCYEGWVLEPDGESCR). N-linked (GlcNAc...) asparagine glycans are attached at residues Asn-1195 and Asn-1218. LDL-receptor class B repeat units lie at residues 1309–1355 (SALY…DWIA), 1356–1398 (GNIY…DPRD), 1399–1445 (GILF…DYLE), 1446–1490 (KRIL…YGGE), and 1491–1531 (VYWT…YHPS). Asn-1511 carries an N-linked (GlcNAc...) (complex) asparagine glycan. The EGF-like 7 domain occupies 1536–1579 (APNPCEANGGQGPCSHLCLINYNRTVSCACPHLMKLHKDNTTCY). 3 cysteine pairs are disulfide-bonded: Cys-1540–Cys-1553, Cys-1549–Cys-1563, and Cys-1565–Cys-1578. 4 N-linked (GlcNAc...) asparagine glycosylation sites follow: Asn-1558, Asn-1575, Asn-1616, and Asn-1645. LDL-receptor class B repeat units follow at residues 1627-1669 (QRVY…DWVS), 1670-1713 (RNLF…HPLR), 1714-1753 (GKLYWTDGDNISMANMDGSNRTLLFSGQKGPVGLAIDFPE), and 1754-1798 (SKLY…MGDK). Residues Asn-1723, Asn-1733, Asn-1763, and Asn-1825 are each glycosylated (N-linked (GlcNAc...) asparagine). One can recognise an EGF-like 8 domain in the interval 1846-1887 (GTNPCSVNNGDCSQLCLPTSETTRSCMCTAGYSLRSGQQACE). 3 disulfide bridges follow: Cys-1850/Cys-1861, Cys-1857/Cys-1871, and Cys-1873/Cys-1886. N-linked (GlcNAc...) asparagine glycosylation occurs at Asn-1933. LDL-receptor class B repeat units follow at residues 1934–1976 (DTIY…DWIA), 1977–2019 (GNIY…HPEK), 2020–2063 (GYLF…DYQD), and 2064–2107 (GKLY…FEDF). An N-linked (GlcNAc...) asparagine glycan is attached at Asn-1995. Lys-2009 is subject to N6-acetyllysine. The N-linked (GlcNAc...) asparagine glycan is linked to Asn-2048. N-linked (GlcNAc...) asparagine glycans are attached at residues Asn-2117 and Asn-2127. In terms of domain architecture, EGF-like 9 spans 2155–2195 (GTNVCAVANGGCQQLCLYRGRGQRACACAHGMLAEDGASCR). Disulfide bonds link Cys-2159/Cys-2170, Cys-2166/Cys-2180, and Cys-2182/Cys-2194. LDL-receptor class B repeat units follow at residues 2253–2294 (NRIF…HRGW), 2295–2343 (DTLY…DECQ), 2344–2388 (NLMF…DHRA), 2389–2431 (EKLY…YGEH), and 2432–2473 (IFWT…VAND). A glycan (N-linked (GlcNAc...) asparagine) is linked at Asn-2472. One can recognise an EGF-like 10 domain in the interval 2478–2518 (ELSPCRINNGGCQDLCLLTHQGHVNCSCRGGRILQDDLTCR). 3 disulfides stabilise this stretch: Cys-2482–Cys-2493, Cys-2489–Cys-2503, and Cys-2505–Cys-2517. N-linked (GlcNAc...) asparagine glycosylation occurs at Asn-2502. The N-linked (GlcNAc...) asparagine glycan is linked to Asn-2521. 7 LDL-receptor class A domains span residues 2522–2563 (SSCR…YCNS), 2564–2602 (RRCKKTFRQCSNGRCVSNMLWCNGADDCGDGSDEIPCNK), 2603–2641 (TACGVGEFRCRDGTCIGNSSRCNQFVDCEDASDEMNCSA), 2642–2690 (TDCS…DCPG), 2694–2732 (PRCPLNYFACPSGRCIPMSWTCDKEDDCEHGEDETHCNK), 2732–2771 (KFCSEAQFECQNHRCISKQWLCDGSDDCGDGSDEAAHCEG), and 2772–2814 (KTCG…GCLY). Disulfide bonds link Cys-2524-Cys-2537, Cys-2532-Cys-2550, Cys-2544-Cys-2561, Cys-2566-Cys-2578, Cys-2573-Cys-2591, and Cys-2585-Cys-2600. An N-linked (GlcNAc...) asparagine glycan is attached at Asn-2539. N-linked (GlcNAc...) asparagine glycosylation is present at Asn-2601. 15 cysteine pairs are disulfide-bonded: Cys-2605/Cys-2617, Cys-2612/Cys-2630, Cys-2624/Cys-2639, Cys-2644/Cys-2666, Cys-2660/Cys-2679, Cys-2673/Cys-2688, Cys-2696/Cys-2708, Cys-2703/Cys-2721, Cys-2715/Cys-2730, Cys-2734/Cys-2746, Cys-2741/Cys-2759, Cys-2753/Cys-2769, Cys-2774/Cys-2787, Cys-2781/Cys-2800, and Cys-2794/Cys-2812. 2 N-linked (GlcNAc...) asparagine glycosylation sites follow: Asn-2620 and Asn-2638. Asn-2815 carries an N-linked (GlcNAc...) asparagine glycan. 3 LDL-receptor class A domains span residues 2816 to 2855 (STCDDREFMCQNRQCIPKHFVCDHDRDCADGSDESPECEY), 2856 to 2899 (PTCG…HCTS), and 2902 to 2940 (HKCNASSQFLCSSGRCVAEALLCNGQDDCGDSSDERGCH). 15 cysteine pairs are disulfide-bonded: Cys-2818-Cys-2830, Cys-2825-Cys-2843, Cys-2837-Cys-2853, Cys-2858-Cys-2870, Cys-2865-Cys-2884, Cys-2878-Cys-2897, Cys-2904-Cys-2917, Cys-2912-Cys-2930, Cys-2924-Cys-2939, Cys-2944-Cys-2956, Cys-2952-Cys-2965, Cys-2967-Cys-2980, Cys-2986-Cys-2996, Cys-2992-Cys-3005, and Cys-3007-Cys-3021. N-linked (GlcNAc...) asparagine glycosylation occurs at Asn-2905. The 41-residue stretch at 2941–2981 (INECLSRKLSGCSQDCEDLKIGFKCRCRPGFRLKDDGRTCA) folds into the EGF-like 11 domain. The region spanning 2982–3022 (DVDECSTTFPCSQRCINTHGSYKCLCVEGYAPRGGDPHSCK) is the EGF-like 12; calcium-binding domain. Asn-3048 and Asn-3089 each carry an N-linked (GlcNAc...) asparagine glycan. 5 LDL-receptor class B repeats span residues 3069 to 3113 (QMIY…DWVG), 3114 to 3156 (GNLY…DVQN), 3157 to 3200 (GYLY…DYVT), 3201 to 3243 (ERIY…FEDY), and 3244 to 3284 (VYWT…FHAL). Asn-3264 carries an N-linked (GlcNAc...) asparagine glycan. The EGF-like 13 domain maps to 3290 to 3331 (PNHPCKVNNGGCSNLCLLSPGGGHKCACPTNFYLGSDGRTCV). Cystine bridges form between Cys-3294-Cys-3305, Cys-3301-Cys-3315, and Cys-3317-Cys-3330. LDL-receptor class A domains follow at residues 3332 to 3371 (SNCTASQFVCKNDKCIPFWWKCDTEDDCGDHSDEPPDCPE), 3372 to 3410 (FKCRPGQFQCSTGICTNPAFICDGDNDCQDNSDEANCDI), 3411 to 3450 (HVCLPSQFKCTNTNRCIPGIFRCNGQDNCGDGEDERDCPE), 3451 to 3491 (VTCA…NCTQ), 3492 to 3533 (MTCG…ECDE), 3534 to 3572 (RTCEPYQFRCKNNRCVPGRWQCDYDNDCGDNSDEESCTP), 3573 to 3611 (RPCSESEFSCANGRCIAGRWKCDGDHDCADGSDEKDCTP), 3611 to 3649 (PRCDMDQFQCKSGHCIPLRWRCDADADCMDGSDEEACGT), 3652 to 3692 (RTCP…ECAR), 3693 to 3733 (FVCP…DCEP), and 3739 to 3778 (THCKDKKEFLCRNQRCLSSSLRCNMFDDCGDGSDEEDCSI). An N-linked (GlcNAc...) asparagine glycan is attached at Asn-3333. 39 disulfides stabilise this stretch: Cys-3334-Cys-3346, Cys-3341-Cys-3359, Cys-3353-Cys-3369, Cys-3374-Cys-3386, Cys-3381-Cys-3399, Cys-3393-Cys-3408, Cys-3413-Cys-3426, Cys-3420-Cys-3439, Cys-3433-Cys-3448, Cys-3453-Cys-3466, Cys-3460-Cys-3479, Cys-3473-Cys-3489, Cys-3494-Cys-3507, Cys-3501-Cys-3520, Cys-3514-Cys-3531, Cys-3536-Cys-3548, Cys-3543-Cys-3561, Cys-3555-Cys-3570, Cys-3575-Cys-3587, Cys-3582-Cys-3600, Cys-3594-Cys-3609, Cys-3613-Cys-3625, Cys-3620-Cys-3638, Cys-3632-Cys-3647, Cys-3654-Cys-3666, Cys-3661-Cys-3679, Cys-3673-Cys-3690, Cys-3695-Cys-3709, Cys-3703-Cys-3722, Cys-3716-Cys-3731, Cys-3741-Cys-3754, Cys-3749-Cys-3767, Cys-3761-Cys-3776, Cys-3785-Cys-3798, Cys-3792-Cys-3807, Cys-3809-Cys-3822, Cys-3828-Cys-3838, Cys-3834-Cys-3847, and Cys-3849-Cys-3860. N-linked (GlcNAc...) asparagine glycosylation occurs at Asn-3488. Asn-3662 is a glycosylation site (N-linked (GlcNAc...) asparagine). EGF-like domains are found at residues 3781 to 3823 (KLTS…PGCQ) and 3824 to 3861 (DINECLRFGTCSQLCNNTKGGHLCSCARNFMKTHNTCK). Residue Asn-3788 is glycosylated (N-linked (GlcNAc...) asparagine). Asn-3839 carries N-linked (GlcNAc...) asparagine glycosylation. LDL-receptor class B repeat units lie at residues 3912–3954 (GRVY…HLNI), 3970–4012 (GNVY…DPLR), 4013–4056 (GTMY…DYHN), and 4057–4101 (ERLY…FEDY). Residues 3940–3943 (RHRR) carry the Recognition site for proteolytical processing motif. Asn-3953 carries an N-linked (GlcNAc...) asparagine glycan. N-linked (GlcNAc...) asparagine glycans are attached at residues Asn-4075 and Asn-4125. EGF-like domains lie at 4147–4183 (VTNPCDRKKCEWLCLLSPSGPVCTCPNGKRLDNGTCV), 4196–4232 (RPGTCNLQCFNGGSCFLNARRQPKCRCQPRYTGDKCE), 4232–4268 (ELDQCWEHCRNGGTCAASPSGMPTCRCPTGFTGPKCT), 4268–4304 (TQQVCAGYCANNSTCTVNQGNQPQCRCLPGFLGDRCQ), 4304–4340 (QYRQCSGYCENFGTCQMAADGSRQCRCTAYFEGSRCE), 4340–4375 (EVNKCSRCLEGACVVNKQSGDVTCNCTDGRVAPSCL), and 4373–4409 (SCLTCVGHCSNGGSCTMNSKMMPECQCPPHMTGPRCE). 17 disulfide bridges follow: Cys-4151–Cys-4160, Cys-4156–Cys-4169, Cys-4171–Cys-4182, Cys-4200–Cys-4210, Cys-4204–Cys-4220, Cys-4222–Cys-4231, Cys-4236–Cys-4246, Cys-4240–Cys-4256, Cys-4258–Cys-4267, Cys-4272–Cys-4282, Cys-4276–Cys-4292, Cys-4294–Cys-4303, Cys-4308–Cys-4318, Cys-4312–Cys-4328, Cys-4330–Cys-4339, Cys-4344–Cys-4352, and Cys-4347–Cys-4363. An N-linked (GlcNAc...) asparagine glycan is attached at Asn-4179. 2 N-linked (GlcNAc...) asparagine glycosylation sites follow: Asn-4278 and Asn-4279. The N-linked (GlcNAc...) asparagine glycan is linked to Asn-4364. 4 cysteine pairs are disulfide-bonded: Cys-4365/Cys-4374, Cys-4377/Cys-4387, Cys-4381/Cys-4397, and Cys-4399/Cys-4408. Residues 4420–4444 (HIASILIPLLLLLLLVLVAGVVFWY) form a helical membrane-spanning segment. Residues 4445–4544 (KRRVQGAKGF…PEDEIGDPLA (100 aa)) lie on the Cytoplasmic side of the membrane. The tract at residues 4445 to 4544 (KRRVQGAKGF…PEDEIGDPLA (100 aa)) is interaction with MAFB. Phosphothreonine is present on Thr-4460. The NPXY motif motif lies at 4502–4507 (FTNPVY). Position 4507 is a phosphotyrosine (Tyr-4507). A phosphoserine mark is found at Ser-4517, Ser-4520, and Ser-4523.

The protein belongs to the LDLR family. Heterodimer of an 85-kDa membrane-bound carboxyl subunit and a non-covalently attached 515-kDa N-terminal subunit. Intracellular domain interacts with MAFB. Found in a complex with PID1/PCLI1, LRP1 and CUBNI. Interacts with SNX17, PID1/PCLI1, PDGF and CUBN. The intracellular domain interacts with SHC1, GULP1 and DAB1. Can weakly interact (via NPXY motif) with DAB2 (via PID domain); the interaction is enhanced by tyrosine phosphorylation of the NPXY motif. Interacts with MDK; promotes neuronal survival. Interacts with LRPAP1; this interaction is followed by rapid internalization. Interacts with uPA/PLAU and PAI1/SERPINE1, either individually or in complex with each other, leading to rapid endocytosis; this interaction is abolished in the presence of LRPAP1/RAP. Also interacts with tPA/PLAT alone or in complex with SERPINE1. Interacts with the urokinase receptor PLAUR; this interaction leads to PLAUR internalization and is impaired in the presence of SORL1. Interacts with PDGFB. Interacts with TAU/MAPT, leading to endocytosis; this interaction is reduced in the presence of LRPAP1/RAP. Interacts with IGFBP3; this interaction mediates cell growth inhibition independently of IGF1. Interacts with ADGRG6. In terms of assembly, (Microbial infection) Interacts with bacterial exotoxins. As to quaternary structure, (Microbial infection) Interacts with Rift valley fever virus (RVFV) glycoprotein N; this interaction facilitates virus entry. In terms of processing, cleaved into a 85 kDa membrane-spanning subunit (LRP-85) and a 515 kDa large extracellular domain (LRP-515) that remains non-covalently associated. Gamma-secretase-dependent cleavage of LRP-85 releases the intracellular domain from the membrane. The N-terminus is blocked. Post-translationally, phosphorylated on serine and threonine residues. In terms of processing, phosphorylated on tyrosine residues upon stimulation with PDGF. Tyrosine phosphorylation promotes interaction with SHC1. Most abundant in liver, brain and lung.

Its subcellular location is the cell membrane. The protein resides in the membrane. It localises to the coated pit. It is found in the cytoplasm. The protein localises to the nucleus. Its subcellular location is the golgi outpost. The protein resides in the cytoskeleton. It localises to the microtubule organizing center. Its function is as follows. Endocytic receptor involved in endocytosis and in phagocytosis of apoptotic cells. Required for early embryonic development. Involved in cellular lipid homeostasis. Involved in the plasma clearance of chylomicron remnants and activated LRPAP1 (alpha 2-macroglobulin), as well as the local metabolism of complexes between plasminogen activators and their endogenous inhibitors. Acts as an LRPAP1 alpha-2-macroglobulin receptor. Acts as TAU/MAPT receptor and controls the endocytosis of TAU/MAPT as well as its subsequent spread. May modulate cellular events, such as APP metabolism, kinase-dependent intracellular signaling, neuronal calcium signaling as well as neurotransmission. Also acts as a receptor for IGFBP3 to mediate cell growth inhibition. In terms of biological role, (Microbial infection) Functions as a receptor for Pseudomonas aeruginosa exotoxin A. This is Prolow-density lipoprotein receptor-related protein 1 from Homo sapiens (Human).